A 420-amino-acid chain; its full sequence is Histidine--tRNA ligase (420 aa).

Belongs to the class-II aminoacyl-tRNA synthetase family. As to quaternary structure, homodimer.

It is found in the cytoplasm. It catalyses the reaction tRNA(His) + L-histidine + ATP = L-histidyl-tRNA(His) + AMP + diphosphate + H(+). This is Histidine--tRNA ligase from Nitrosomonas europaea (strain ATCC 19718 / CIP 103999 / KCTC 2705 / NBRC 14298).